A 123-amino-acid chain; its full sequence is Probable prefoldin subunit 4 (123 aa).

It belongs to the prefoldin subunit beta family. In terms of assembly, heterohexamer of two PFD-alpha type and four PFD-beta type subunits.

Its function is as follows. Binds specifically to cytosolic chaperonin (c-CPN) and transfers target proteins to it. Binds to nascent polypeptide chain and promotes folding in an environment in which there are many competing pathways for nonnative proteins. In Schizosaccharomyces pombe (strain 972 / ATCC 24843) (Fission yeast), this protein is Probable prefoldin subunit 4.